Reading from the N-terminus, the 705-residue chain is Glycogen [starch] synthase isoform 2 (705 aa).

A UDP-binding site is contributed by arginine 20. Position 159 is a phosphoserine (serine 159). UDP-alpha-D-glucose-binding residues include histidine 193 and arginine 199. The alpha-D-glucose 6-phosphate site is built by histidine 280, glutamate 281, glutamine 283, histidine 286, and lysine 290. Arginine 320 contributes to the UDP binding site. Position 320 (arginine 320) interacts with UDP-alpha-D-glucose. Phosphoserine is present on residues serine 363 and serine 467. An alpha-D-glucose 6-phosphate-binding site is contributed by histidine 500. 3 residues coordinate UDP-alpha-D-glucose: glutamate 509, tryptophan 511, and glycine 512. Threonine 514 contacts UDP. The alpha-D-glucose 6-phosphate site is built by arginine 583 and arginine 587. Phosphoserine is present on serine 651. Serine 655 carries the post-translational modification Phosphoserine; by PHO85. Phosphoserine; by PKA is present on residues serine 661 and serine 663. Residue threonine 668 is modified to Phosphothreonine; by PHO85. A disordered region spans residues 686–705 (SLGVNPAADDDDDGPYADDS). Acidic residues predominate over residues 693–705 (ADDDDDGPYADDS).

The protein belongs to the glycosyltransferase 3 family. Interacts with PCL10. Post-translationally, phosphorylated by the cyclin-CDK PCL10-PHO85. Phosphorylation causes inactivation of enzyme.

It localises to the cytoplasm. It is found in the cytosol. It catalyses the reaction [(1-&gt;4)-alpha-D-glucosyl](n) + UDP-alpha-D-glucose = [(1-&gt;4)-alpha-D-glucosyl](n+1) + UDP + H(+). Its pathway is glycan biosynthesis; glycogen biosynthesis. Allosteric activation by glucose-6-phosphate, and phosphorylation by a cAMP-dependent kinase. Its function is as follows. Glycogen synthase participates in the glycogen biosynthetic process along with glycogenin and glycogen branching enzyme. Extends the primer composed of a few glucose units formed by glycogenin by adding new glucose units to it. In this context, glycogen synthase transfers the glycosyl residue from UDP-Glc to the non-reducing end of alpha-1,4-glucan. The polypeptide is Glycogen [starch] synthase isoform 2 (GSY2) (Saccharomyces cerevisiae (strain ATCC 204508 / S288c) (Baker's yeast)).